We begin with the raw amino-acid sequence, 361 residues long: T-box-containing protein TBX6L (361 aa).

Positions 36–209 (LWMKFHQIGT…NNPFAKGFRE (174 aa)) form a DNA-binding region, T-box. 2 disordered regions span residues 203 to 259 (FAKG…VKEE) and 280 to 323 (HAFP…QLPS). Composition is skewed to basic and acidic residues over residues 206–220 (GFRE…EGRA) and 234–259 (KLPE…VKEE). Residues 280–290 (HAFPAASPAPA) show a composition bias toward low complexity.

The protein localises to the nucleus. In terms of biological role, may be involved in regulating somitogenesis. In Gallus gallus (Chicken), this protein is T-box-containing protein TBX6L (TBX6L).